The sequence spans 141 residues: Hemoglobin subunit alpha (141 aa).

Residues 1–141 (VLSPGDKSNI…VSTVLTSKYR (141 aa)) enclose the Globin domain. At S3 the chain carries Phosphoserine. An N6-succinyllysine mark is found at K7 and K11. Residue K16 is modified to N6-acetyllysine; alternate. K16 is subject to N6-succinyllysine; alternate. Y24 is subject to Phosphotyrosine. S35 carries the post-translational modification Phosphoserine. An N6-succinyllysine modification is found at K40. Residue S49 is modified to Phosphoserine. H58 contacts O2. H87 contributes to the heme b binding site. A Phosphoserine modification is found at S102. T108 carries the post-translational modification Phosphothreonine. S124 carries the post-translational modification Phosphoserine. 2 positions are modified to phosphothreonine: T134 and T137. S138 carries the phosphoserine modification.

This sequence belongs to the globin family. In terms of assembly, heterotetramer of two alpha chains and two beta chains. As to expression, red blood cells.

In terms of biological role, involved in oxygen transport from the lung to the various peripheral tissues. Hemopressin acts as an antagonist peptide of the cannabinoid receptor CNR1. Hemopressin-binding efficiently blocks cannabinoid receptor CNR1 and subsequent signaling. This is Hemoglobin subunit alpha (HBA) from Tupaia glis (Common tree shrew).